The chain runs to 283 residues: Phosphatidylserine decarboxylase proenzyme (283 aa).

Residues Asp96, His152, and Ser250 each act as charge relay system; for autoendoproteolytic cleavage activity in the active site. Ser250 (schiff-base intermediate with substrate; via pyruvic acid; for decarboxylase activity) is an active-site residue. The residue at position 250 (Ser250) is a Pyruvic acid (Ser); by autocatalysis.

The protein belongs to the phosphatidylserine decarboxylase family. PSD-B subfamily. Prokaryotic type I sub-subfamily. In terms of assembly, heterodimer of a large membrane-associated beta subunit and a small pyruvoyl-containing alpha subunit. Pyruvate serves as cofactor. Is synthesized initially as an inactive proenzyme. Formation of the active enzyme involves a self-maturation process in which the active site pyruvoyl group is generated from an internal serine residue via an autocatalytic post-translational modification. Two non-identical subunits are generated from the proenzyme in this reaction, and the pyruvate is formed at the N-terminus of the alpha chain, which is derived from the carboxyl end of the proenzyme. The autoendoproteolytic cleavage occurs by a canonical serine protease mechanism, in which the side chain hydroxyl group of the serine supplies its oxygen atom to form the C-terminus of the beta chain, while the remainder of the serine residue undergoes an oxidative deamination to produce ammonia and the pyruvoyl prosthetic group on the alpha chain. During this reaction, the Ser that is part of the protease active site of the proenzyme becomes the pyruvoyl prosthetic group, which constitutes an essential element of the active site of the mature decarboxylase.

The protein resides in the cell membrane. The catalysed reaction is a 1,2-diacyl-sn-glycero-3-phospho-L-serine + H(+) = a 1,2-diacyl-sn-glycero-3-phosphoethanolamine + CO2. It participates in phospholipid metabolism; phosphatidylethanolamine biosynthesis; phosphatidylethanolamine from CDP-diacylglycerol: step 2/2. In terms of biological role, catalyzes the formation of phosphatidylethanolamine (PtdEtn) from phosphatidylserine (PtdSer). The polypeptide is Phosphatidylserine decarboxylase proenzyme (Acinetobacter baumannii (strain SDF)).